The primary structure comprises 1866 residues: Rho GTPase-activating protein 100F (1866 aa).

Disordered stretches follow at residues 22–98, 262–336, and 466–530; these read MLCC…AGVK, RRGN…NNYS, and LRSS…DTEA. Positions 59 to 77 are enriched in low complexity; that stretch reads GNQQHHGNQQHHGNQQQHH. In terms of domain architecture, PDZ spans 179–264; sequence LVEIVKRPGQ…LVLAIRQRRG (86 aa). A compositionally biased stretch (pro residues) spans 271-286; sequence PGPPTLSRPEQKPPPV. Over residues 301-326 the composition is skewed to basic and acidic residues; the sequence is TDRMPRPRSSRDRRTGDGREMTESRS. Position 719 is a phosphoserine (S719). Positions 745 to 775 are disordered; sequence AGPASPSGSILSTGGHQSPAPTPSATLPRPH. A compositionally biased stretch (polar residues) spans 750-760; the sequence is PSGSILSTGGH. The C2 domain maps to 789-908; that stretch reads KLDKPIVDIG…LRQSPLHQLA (120 aa). Residues 948–1148 form the Rho-GAP domain; that stretch reads ADLETVVNRE…YLLQIWPQPQ (201 aa). Disordered stretches follow at residues 1273–1328, 1356–1380, 1393–1479, 1514–1607, 1644–1727, and 1819–1840; these read GGSV…QVKI, PTTQ…RRGN, SVVN…DLVS, FTPI…MVST, YTND…YGTL, and DEKP…ADKG. Residues 1282–1292 are compositionally biased toward pro residues; it reads DPSPLPLPGTP. Positions 1293 to 1302 are enriched in low complexity; the sequence is SPGSSSASTG. Polar residues-rich tracts occupy residues 1356–1377, 1393–1408, and 1416–1429; these read PTTQ…TASR, SVVN…YTGS, and GNSS…NASG. Low complexity predominate over residues 1443–1479; that stretch reads SSATSSSSSSQATVLSAGSTATSAPTTSSDDSDDLVS. A compositionally biased stretch (polar residues) spans 1538 to 1587; that stretch reads QLVTPISGSSSKPGATTGAISKYTTGSVESSINANSQKLSSPSRLCNSKD. Low complexity-rich tracts occupy residues 1590–1607 and 1644–1658; these read SRTG…MVST and YTND…SSKS. A compositionally biased stretch (gly residues) spans 1659–1670; that stretch reads GIGGGSGTGLGA. 2 stretches are compositionally biased toward low complexity: residues 1671–1688 and 1696–1720; these read VSGA…LFGS and GSSH…NHNT. The span at 1830-1839 shows a compositional bias: basic and acidic residues; sequence HGEEKLGADK.

As to quaternary structure, interacts (via PDZ domain) with Nrx-1; may recruit Nrx-1 to the presynaptic active zone.

Its subcellular location is the presynapse. GTPase activator for the Rho-type GTPases by converting them to an inactive GDP-bound state. Promotes the anchoring of Liprin-alpha clusters at synapses. Recruits and keeps Nrx-1 levels high in active zones in the presynapse opposite the postsynaptic region. This is Rho GTPase-activating protein 100F (RhoGAP100F) from Drosophila melanogaster (Fruit fly).